A 541-amino-acid chain; its full sequence is Zingiberene synthase (541 aa).

Mg(2+) contacts are provided by Asp295, Asp299, Asn439, Ser443, and Glu447. Positions 295 to 299 (DDIID) match the DDXXD motif motif.

It belongs to the terpene synthase family. Requires Mg(2+) as cofactor. It depends on Mn(2+) as a cofactor.

The protein localises to the cytoplasm. It catalyses the reaction (2E,6E)-farnesyl diphosphate = alpha-zingiberene + diphosphate. It functions in the pathway secondary metabolite biosynthesis; terpenoid biosynthesis. Its function is as follows. Sesquiterpene synthase converting farnesyl diphosphate into two major products, zingiberene &gt; beta-sesquiphellandrene, and five minor products, 7-epi-sesquithujene, sesquisabinene A, (E)-alpha-bergamotene, (E)-beta-farnesene and beta-bisabolene. Can also accept geranyl diphosphate as substrate, producing nine monoterpenes, with myrcene, limonene and alpha-terpinolene as the major products. The sequence is that of Zingiberene synthase (TPS1) from Sorghum bicolor (Sorghum).